Here is a 936-residue protein sequence, read N- to C-terminus: MSSLNLSAGPEPVSERPDDAAAIEAETRLRNDIRLLGRILGDTVREQEGQSVFDLVENIRQTSIRFHRDDDKTARAELAAILDGMSIQDTMRIVRAFSYFSHLANIAEDQNNIRQMRAGSTAGSAPRAGLLAKTLAHARQEGISAAELRKFFATALVSPVLTAHPTEVRRKSTMDREMQIAGLLDQRDRVQLTADEWTDNEERLRRAVETLWKTNLLRRTKLTVLDEVTNGLSFYDYTFLREVPRLHSALEDRLADAAKAEGANAEGELASFLRMGSWIGGDRDGNPFVTAEVLHGTLKLQSTRVLRYYLEELHELGSELSLASHLAGTTDTVKALAETSPDTSPHRKYEPYRLAVSGIYARLAATALKLEVENLRAPVGEAEPYASAQDFKADLDAIHLSLTTHHSGVIARGRLRQLRRAIDCFGFHLASLDMRQNSAVHERTIGELMDAARPGTSYAVLDEDARIALLISELRSTRPLTSMFVKYSDETVGELAVFREAAKAHATYGAAAIPQCIISMTKGVSDLLELAVLLKEVGLIDPSGRSAINVVPLFETIEDLQACAKIMDRLLSIPEYRRLVDSRGSVQEVMLGYSDSNKDGGFVTSGWELYKAEIGLIEIFEHHGVRLRLFHGRGGSVGRGGGPSYDAIVAQPGGAVNGQIRITEQGEIITSKYSNVEVGRNNLEILAAATLEASLLQPKRVAPHRDYLEAMEQLSALAFKAYRGLVYETDGFVDYFWASTVINEISTLNIGSRPASRKKTRAIEDLRAIPWVFSWAQCRLMLPGWYGFGSAVSAWVTEHPEKGIAFLQAMYQEWPFFRTLLSNMDMVLSKSSIGIASRYAELVEDTAIRDRIFSRIRAEWHSSIDYLLAIMQQDHLLQSNPLLERSIRHRFPYLDPLNHVQVQLLREHRTHDPDEQVLRGVQLTINGISAGLRNSG.

Positions 1–20 (MSSLNLSAGPEPVSERPDDA) are disordered. Catalysis depends on residues H164 and K598.

The protein belongs to the PEPCase type 1 family. Mg(2+) is required as a cofactor.

The enzyme catalyses oxaloacetate + phosphate = phosphoenolpyruvate + hydrogencarbonate. Functionally, forms oxaloacetate, a four-carbon dicarboxylic acid source for the tricarboxylic acid cycle. In Rhodopseudomonas palustris (strain ATCC BAA-98 / CGA009), this protein is Phosphoenolpyruvate carboxylase (ppc).